A 335-amino-acid chain; its full sequence is Prepilin leader peptidase/N-methyltransferase (335 aa).

The chain crosses the membrane as a helical span at residues 13 to 33 (LFAVFLFVLGLCVGSFLNVVI). Zn(2+) contacts are provided by Cys-49, Cys-52, Cys-74, and Cys-77. 5 helical membrane passes run 105–125 (WTYE…LAFI), 131–151 (ILPL…AFPL), 206–226 (LLGV…LMLL), 258–278 (PGLP…VQPI), and 299–319 (IPFG…GPWL).

This sequence belongs to the peptidase A24 family. Zn(2+) serves as cofactor.

It localises to the cell inner membrane. It catalyses the reaction Typically cleaves a -Gly-|-Phe- bond to release an N-terminal, basic peptide of 5-8 residues from type IV prepilin, and then N-methylates the new N-terminal amino group, the methyl donor being S-adenosyl-L-methionine.. Plays an essential role in type IV pili and type II pseudopili formation by proteolytically removing the leader sequence from substrate proteins and subsequently monomethylating the alpha-amino group of the newly exposed N-terminal phenylalanine. The protein is Prepilin leader peptidase/N-methyltransferase (pilD) of Myxococcus xanthus (strain DK1622).